The primary structure comprises 369 residues: Bi-functional coumaroyl CoA and feruloyl CoA ortho-hydroxylase Diox1 (369 aa).

Positions 209-319 constitute a Fe2OG dioxygenase domain; sequence IREPMLVGSR…RISVPLFVNP (111 aa). 2-oxoglutarate is bound at residue tyrosine 225. Fe cation contacts are provided by histidine 240, aspartate 242, and histidine 300. 2 residues coordinate 2-oxoglutarate: arginine 310 and serine 312.

Belongs to the iron/ascorbate-dependent oxidoreductase family. L-ascorbate is required as a cofactor. Requires Fe(2+) as cofactor.

It carries out the reaction (E)-4-coumaroyl-CoA + 2-oxoglutarate + O2 = (E)-2,4-dihydroxycinnamoyl-CoA + succinate + CO2. The enzyme catalyses (E)-feruloyl-CoA + 2-oxoglutarate + O2 = (E)-6-hydroxyferuloyl-CoA + succinate + CO2. The protein operates within phenylpropanoid metabolism. Functionally, 2-oxoglutarate (OG)- and Fe(II)-dependent dioxygenase (2OGD) involved in scopoletin and umbelliferone biosynthesis. Converts feruloyl CoA into 6'-hydroxyferuloyl CoA, and p-coumaroyl CoA into 2,4-dihydroxycinnamoyl-CoA. The sequence is that of Bi-functional coumaroyl CoA and feruloyl CoA ortho-hydroxylase Diox1 from Ruta graveolens (Common rue).